Reading from the N-terminus, the 155-residue chain is DNA gyrase inhibitor (155 aa).

Belongs to the DNA gyrase inhibitor family. Interacts with DNA gyrase.

It localises to the cytoplasm. Functionally, inhibits the supercoiling activity of DNA gyrase. Acts by inhibiting DNA gyrase at an early step, prior to (or at the step of) binding of DNA by the gyrase. It protects cells against toxins that target DNA gyrase, by inhibiting activity of these toxins and reducing the formation of lethal double-strand breaks in the cell. The protein is DNA gyrase inhibitor of Edwardsiella ictaluri (strain 93-146).